Consider the following 534-residue polypeptide: Low affinity inorganic phosphate transporter 1 (534 aa).

Residues 1–23 (MAKDLQVLTALDVAKTQLYHFTA) lie on the Cytoplasmic side of the membrane. The chain crosses the membrane as a helical span at residues 24 to 44 (IVIAGMGFFTDAYDLFCISLV). Residues 45–69 (TKLLGRIYYHHEGALKPGSLPPNVA) are Extracellular-facing. The helical transmembrane segment at 70–90 (AAVNGVAFCGTLAGQLFFGWL) threads the bilayer. The Cytoplasmic portion of the chain corresponds to 91-98 (GDKLGRKK). The chain crosses the membrane as a helical span at residues 99-119 (VYGMTLMLMVICSIASGLSFG). The Extracellular segment spans residues 120 to 124 (HTPKS). The helical transmembrane segment at 125–145 (VMATLCFFRFWLGFGIGGDYP) threads the bilayer. Residues 146 to 163 (LSATIMSEYANKKTRGAF) are Cytoplasmic-facing. The helical transmembrane segment at 164–184 (IAAVFAMQGFGILAGGMVAII) threads the bilayer. Residues 185–210 (VSAAFKNQFPAPAYKDGALASTISQA) lie on the Extracellular side of the membrane. The helical transmembrane segment at 211–231 (DFVWRIIVMFGAIPTALTYYW) threads the bilayer. The Cytoplasmic portion of the chain corresponds to 232-290 (RMKMPETARYTALVAKNLKQATNDMSKVLQVEIEPEQEKVEEISQGNDFGLFTKQFLRR). A helical transmembrane segment spans residues 291–311 (HGLHLLGTASTWFLLDIAFYS). Residues 312-343 (QNLFQKDIFSAIGWIPPAETMNALEEVYRIAR) are Extracellular-facing. A helical transmembrane segment spans residues 344-364 (AQTLIALCSTVPGYWFTVAFI). The Cytoplasmic segment spans residues 365–369 (DKIGR). Residues 370–390 (FAIQLMGFFFMTVFMFALAIP) form a helical membrane-spanning segment. Residues 391–400 (YTHWTHKDNR) lie on the Extracellular side of the membrane. A helical transmembrane segment spans residues 401–421 (IGFVIMYSLTFFFANFGPNAT). The Cytoplasmic portion of the chain corresponds to 422–440 (TFVVPAEIFPARLRSTCHG). A helical transmembrane segment spans residues 441–461 (ISAAAGKAGAMVGAFGFLYAA). Topologically, residues 462-481 (QSTDPKKTDAGYPAGIGVRN) are extracellular. A helical membrane pass occupies residues 482–502 (SLIVLGCVNFLGMLFTLLVPE). Over 503–534 (SKGKSLEEMSRENEGEDENGTEMRASGRTVPV) the chain is Cytoplasmic. A disordered region spans residues 507 to 534 (SLEEMSRENEGEDENGTEMRASGRTVPV).

This sequence belongs to the major facilitator superfamily. Phosphate:H(+) symporter (TC 2.A.1.9) family.

Its subcellular location is the cell membrane. The enzyme catalyses phosphate(in) + H(+)(in) = phosphate(out) + H(+)(out). Functionally, low-affinity transporter for external inorganic phosphate (Pi). Involved in phosphorus (P) remobilization from dying to developing tissues during corolla senescence in an ethylene-dependent manner. This chain is Low affinity inorganic phosphate transporter 1, found in Petunia hybrida (Petunia).